A 98-amino-acid polypeptide reads, in one-letter code: MLEQQPTQNPLTVSMLNAQAQQVDRPLRENVKQAVRNYLRNLDGQDPTELYELVLSEIEHPMLDMVMQHTRGNQTRAATMLGINRGTLRKKLKKYGMG.

Residues 74-93 (QTRAATMLGINRGTLRKKLK) constitute a DNA-binding region (H-T-H motif).

The protein belongs to the transcriptional regulatory Fis family. As to quaternary structure, homodimer.

Activates ribosomal RNA transcription. Plays a direct role in upstream activation of rRNA promoters. This chain is DNA-binding protein Fis, found in Glaesserella parasuis serovar 5 (strain SH0165) (Haemophilus parasuis).